We begin with the raw amino-acid sequence, 185 residues long: dCTP deaminase (185 aa).

DCTP-binding positions include 107–112 (KSTYAR), 131–133 (TLE), Gln-152, Tyr-166, and Gln-176. Glu-133 functions as the Proton donor/acceptor in the catalytic mechanism.

This sequence belongs to the dCTP deaminase family. As to quaternary structure, homotrimer.

The enzyme catalyses dCTP + H2O + H(+) = dUTP + NH4(+). Its pathway is pyrimidine metabolism; dUMP biosynthesis; dUMP from dCTP (dUTP route): step 1/2. Functionally, catalyzes the deamination of dCTP to dUTP. The sequence is that of dCTP deaminase from Anaplasma phagocytophilum (strain HZ).